The primary structure comprises 120 residues: NAD(P)H-quinone oxidoreductase subunit 3, chloroplastic (120 aa).

Helical transmembrane passes span 9–29, 64–84, and 88–108; these read FFWAFLIISILVPILAFFISG, MFALVFVVFDVETVFLYPWAM, and VLGVSVFIEAFIFVLILIIGL.

This sequence belongs to the complex I subunit 3 family. As to quaternary structure, NDH is composed of at least 16 different subunits, 5 of which are encoded in the nucleus.

It is found in the plastid. Its subcellular location is the chloroplast thylakoid membrane. It catalyses the reaction a plastoquinone + NADH + (n+1) H(+)(in) = a plastoquinol + NAD(+) + n H(+)(out). The enzyme catalyses a plastoquinone + NADPH + (n+1) H(+)(in) = a plastoquinol + NADP(+) + n H(+)(out). Its function is as follows. NDH shuttles electrons from NAD(P)H:plastoquinone, via FMN and iron-sulfur (Fe-S) centers, to quinones in the photosynthetic chain and possibly in a chloroplast respiratory chain. The immediate electron acceptor for the enzyme in this species is believed to be plastoquinone. Couples the redox reaction to proton translocation, and thus conserves the redox energy in a proton gradient. In Atropa belladonna (Belladonna), this protein is NAD(P)H-quinone oxidoreductase subunit 3, chloroplastic.